The sequence spans 411 residues: Acetyl-coenzyme A carboxylase carboxyl transferase subunit beta, chloroplastic (411 aa).

Positions 32-302 constitute a CoA carboxyltransferase N-terminal domain; the sequence is LWTRCDHCGV…KEQGRIPYGE (271 aa). Cys36, Cys39, Cys55, and Cys58 together coordinate Zn(2+). The segment at 36 to 58 adopts a C4-type zinc-finger fold; sequence CDHCGVILYIKHLKENQRVCFGC.

Belongs to the AccD/PCCB family. As to quaternary structure, acetyl-CoA carboxylase is a heterohexamer composed of biotin carboxyl carrier protein, biotin carboxylase and 2 subunits each of ACCase subunit alpha and ACCase plastid-coded subunit beta (accD). Zn(2+) is required as a cofactor.

The protein localises to the plastid. Its subcellular location is the chloroplast stroma. It carries out the reaction N(6)-carboxybiotinyl-L-lysyl-[protein] + acetyl-CoA = N(6)-biotinyl-L-lysyl-[protein] + malonyl-CoA. Its pathway is lipid metabolism; malonyl-CoA biosynthesis; malonyl-CoA from acetyl-CoA: step 1/1. Component of the acetyl coenzyme A carboxylase (ACC) complex. Biotin carboxylase (BC) catalyzes the carboxylation of biotin on its carrier protein (BCCP) and then the CO(2) group is transferred by the transcarboxylase to acetyl-CoA to form malonyl-CoA. The chain is Acetyl-coenzyme A carboxylase carboxyl transferase subunit beta, chloroplastic from Chlorella vulgaris (Green alga).